A 76-amino-acid chain; its full sequence is Heat shock factor-binding protein 1 (76 aa).

This sequence belongs to the HSBP1 family. As to quaternary structure, homohexamer. Associates with heptad repeats of HSF1 trimers and probably also HSF1 monomers, and with HSP70. Association with HSF1 trimers and HSP70 coincides with attenuation of heat shock response and the conversion of HSF1 trimer to monomer.

It localises to the nucleus. Its function is as follows. Negative regulator of the heat shock response. Negatively affects HSF1 DNA-binding activity. May have a role in the suppression of the activation of the stress response during the aging process. The protein is Heat shock factor-binding protein 1 (HSBP1) of Homo sapiens (Human).